The chain runs to 203 residues: UDP-N-acetylglucosamine transferase subunit ALG13 (203 aa).

Belongs to the glycosyltransferase 28 family. As to quaternary structure, heterodimer with ALG14 to form a functional enzyme.

Its subcellular location is the endoplasmic reticulum. The catalysed reaction is an N-acetyl-alpha-D-glucosaminyl-diphospho-di-trans,poly-cis-dolichol + UDP-N-acetyl-alpha-D-glucosamine = an N,N'-diacetylchitobiosyl-diphospho-di-trans,poly-cis-dolichol + UDP + H(+). Involved in protein N-glycosylation. Essential for the second step of the dolichol-linked oligosaccharide pathway. In Eremothecium gossypii (strain ATCC 10895 / CBS 109.51 / FGSC 9923 / NRRL Y-1056) (Yeast), this protein is UDP-N-acetylglucosamine transferase subunit ALG13 (ALG13).